A 274-amino-acid chain; its full sequence is Probable formate transporter (274 aa).

A run of 7 helical transmembrane segments spans residues 31–51 (IVLSFLAGAYIAFGGLLAEVV), 62–82 (AGLVKLVFGAVFPVGLMLVVI), 118–138 (VFNLVGAVFVAYFLAVATGIL), 176–196 (AFWRAVGCNWLVCLAVYLAIA), 200–220 (IIGKIWGIWFPIFAFVAIGFE), 226–246 (MFFIPVGIFLGGVTWSQFFMN), and 248–268 (LIPVTLGNIVGGAIFVACLYW).

It belongs to the FNT transporter (TC 1.A.16) family.

It is found in the cell membrane. Its function is as follows. May act as a formate transporter. The polypeptide is Probable formate transporter (fdhC) (Methanothermobacter thermautotrophicus (Methanobacterium thermoformicicum)).